The following is a 450-amino-acid chain: LanC-like protein 2 (450 aa).

Glycine 2 is lipidated: N-myristoyl glycine. The interval 2-14 (GETMSKRLKFHLG) is interaction with inositol phospholipids. Tyrosine 198 bears the Phosphotyrosine mark.

Belongs to the LanC-like protein family. As to quaternary structure, interacts with an array of inositol phospholipids such as phosphatidylinositol 3-phosphate (PI3P), phosphatidylinositol 4-phosphate (PI4P) and phosphatidylinositol 5-phosphate (PI5P). PIP-binding enhances membrane association. In terms of processing, myristoylated. Essential for membrane association.

Its subcellular location is the nucleus. It localises to the cytoplasm. It is found in the cell membrane. Necessary for abscisic acid (ABA) binding on the cell membrane and activation of the ABA signaling pathway in granulocytes. This chain is LanC-like protein 2 (Lancl2), found in Mus musculus (Mouse).